Here is a 100-residue protein sequence, read N- to C-terminus: Small ribosomal subunit protein bS18c (100 aa).

The protein belongs to the bacterial ribosomal protein bS18 family. As to quaternary structure, part of the 30S ribosomal subunit.

The protein localises to the plastid. The protein resides in the chloroplast. This chain is Small ribosomal subunit protein bS18c, found in Pleurastrum terricola (Filamentous green alga).